Reading from the N-terminus, the 150-residue chain is UPF0208 membrane protein VP2081 (150 aa).

A run of 2 helical transmembrane segments spans residues 42–62 and 70–90; these read FGIK…MAFN and SIVV…WLGA.

Belongs to the UPF0208 family.

The protein resides in the cell inner membrane. This chain is UPF0208 membrane protein VP2081, found in Vibrio parahaemolyticus serotype O3:K6 (strain RIMD 2210633).